The following is a 411-amino-acid chain: Bifunctional protein GlmU (411 aa).

A pyrophosphorylase region spans residues 1–204 (MDAVILCAGK…ENNIKGIKLN (204 aa)). Residues 6–9 (LCAG), Gln-74, and Gly-79 each bind UTP. N-acetyl-alpha-D-glucosamine 1-phosphate is bound by residues Thr-80, Gly-132, Glu-144, and Asn-158. The tract at residues 205 to 224 (GYWNDIGKPWDLLDANTHIL) is linker. An N-acetyltransferase region spans residues 225–411 (KNIKTDIKGK…EEIIIKTKRK (187 aa)). Residue His-308 is the Proton acceptor of the active site. The acetyl-CoA site is built by Ala-384 and Lys-401.

It in the N-terminal section; belongs to the N-acetylglucosamine-1-phosphate uridyltransferase family. This sequence in the C-terminal section; belongs to the transferase hexapeptide repeat family.

It carries out the reaction N-acetyl-alpha-D-glucosamine 1-phosphate + UTP + H(+) = UDP-N-acetyl-alpha-D-glucosamine + diphosphate. The catalysed reaction is alpha-D-glucosamine 1-phosphate + acetyl-CoA = N-acetyl-alpha-D-glucosamine 1-phosphate + CoA + H(+). The protein operates within nucleotide-sugar biosynthesis; UDP-N-acetyl-alpha-D-glucosamine biosynthesis; N-acetyl-alpha-D-glucosamine 1-phosphate from alpha-D-glucosamine 6-phosphate (route II): step 2/2. Its pathway is nucleotide-sugar biosynthesis; UDP-N-acetyl-alpha-D-glucosamine biosynthesis; UDP-N-acetyl-alpha-D-glucosamine from N-acetyl-alpha-D-glucosamine 1-phosphate: step 1/1. Its function is as follows. Catalyzes the last two sequential reactions in the de novo biosynthetic pathway for UDP-N-acetyl-glucosamine (UDP-GlcNAc). Responsible for the acetylation of GlcN-1-P to GlcNAc-1-P, and for the uridyl transfer from UTP to GlcNAc-1-P, to produce UDP-GlcNAc and pyrophosphate. In Methanococcus aeolicus (strain ATCC BAA-1280 / DSM 17508 / OCM 812 / Nankai-3), this protein is Bifunctional protein GlmU.